The primary structure comprises 212 residues: Chloramphenicol acetyltransferase (212 aa).

Residue H186 is the Proton acceptor of the active site.

Belongs to the chloramphenicol acetyltransferase family. Homotrimer.

The catalysed reaction is chloramphenicol + acetyl-CoA = chloramphenicol 3-acetate + CoA. Functionally, this enzyme is an effector of chloramphenicol resistance in bacteria. This is Chloramphenicol acetyltransferase (catD) from Clostridioides difficile (Peptoclostridium difficile).